The following is a 341-amino-acid chain: S-adenosylmethionine:tRNA ribosyltransferase-isomerase (341 aa).

This sequence belongs to the QueA family. In terms of assembly, monomer.

The protein localises to the cytoplasm. The catalysed reaction is 7-aminomethyl-7-carbaguanosine(34) in tRNA + S-adenosyl-L-methionine = epoxyqueuosine(34) in tRNA + adenine + L-methionine + 2 H(+). Its pathway is tRNA modification; tRNA-queuosine biosynthesis. Its function is as follows. Transfers and isomerizes the ribose moiety from AdoMet to the 7-aminomethyl group of 7-deazaguanine (preQ1-tRNA) to give epoxyqueuosine (oQ-tRNA). The sequence is that of S-adenosylmethionine:tRNA ribosyltransferase-isomerase from Staphylococcus epidermidis (strain ATCC 35984 / DSM 28319 / BCRC 17069 / CCUG 31568 / BM 3577 / RP62A).